Consider the following 358-residue polypeptide: Snurportin-1 (358 aa).

The residue at position 1 (Met-1) is an N-acetylmethionine. 2 disordered regions span residues 1 to 26 and 69 to 90; these read MEELSQALASSFSVSQELNSTAAPHP and DWTGMESGEEENKKDEEEMDID. The tract at residues 1 to 65 is necessary for interaction with KPNB1 and m3G-cap U1 and U5 snRNP import receptor activity; the sequence is MEELSQALAS…LDYVNHARRL (65 aa). The necessary for interaction with XPO1 stretch occupies residues 1–160; it reads MEELSQALAS…NRFSSLLPGG (160 aa). Residues 7-22 are compositionally biased toward polar residues; that stretch reads ALASSFSVSQELNSTA. The region spanning 11 to 73 is the IBB domain; the sequence is SFSVSQELNS…RLAEDDWTGM (63 aa). Ser-75 carries the phosphoserine modification. The tract at residues 128–130 is interaction with m3G-cap structure; it reads GKR. The tract at residues 210-329 is necessary for binding to the m3G-cap structure; it reads MHSKLPEEEG…DTKEKLTHKA (120 aa). Basic and acidic residues predominate over residues 315–341; it reads KRSQEDTKEKLTHKASENGHYELEHLS. The tract at residues 315 to 358 is disordered; that stretch reads KRSQEDTKEKLTHKASENGHYELEHLSTPKLRNPPHSSESLMDN. Residues 349–358 are compositionally biased toward polar residues; that stretch reads PHSSESLMDN. A Phosphoserine modification is found at Ser-351.

Belongs to the snurportin family. As to quaternary structure, component of an import snRNP complex composed of KPNB1, SNUPN, SMN1 and ZNF259. Component of a nuclear export receptor complex composed of KPNB1, Ran, SNUPN and XPO1. Found in a trimeric export complex with SNUPN, Ran and XPO1. Interacts (via IBB domain) with KPNB1; the interaction is direct. Interacts with DDX20, IPO7, SMN1, SNRPB and XPO1. Interacts directly with XPO1. Its interaction with XPO1 and binding to m3G-cap U snRNPs appears to be mutually exclusive. Can form homomers.

Its subcellular location is the nucleus. The protein localises to the cytoplasm. Functionally, functions as an U snRNP-specific nuclear import adapter. Involved in the trimethylguanosine (m3G)-cap-dependent nuclear import of U snRNPs. Binds specifically to the terminal m3G-cap U snRNAs. The sequence is that of Snurportin-1 (Snupn) from Mus musculus (Mouse).